Reading from the N-terminus, the 312-residue chain is Golgi to ER traffic protein 2 (312 aa).

The Cytoplasmic segment spans residues 1 to 175; that stretch reads MSDSPSISAE…VQYNTYRHQV (175 aa). Residues 176–196 traverse the membrane as a helical segment; it reads WKFRFLAVRYFALLANFIYHF. The Lumenal portion of the chain corresponds to 197-224; the sequence is YIIGDSISFASSSHQFIRELIPVEPARS. Residues 225 to 244 form a helical membrane-spanning segment; sequence FFTLFSTIEVVIIASYYFLG. Residues 245 to 288 lie on the Cytoplasmic side of the membrane; sequence TKEGFFSTATSNNFVVKLLDMGSMVLPQLQQFKTIAVRLLGYYE. Residues 289 to 309 traverse the membrane as a helical segment; sequence LLAVLLGDLSLVVVLFGLHSV. Residues 310 to 312 lie on the Lumenal side of the membrane; it reads LGN.

This sequence belongs to the GET2 family. As to quaternary structure, component of the Golgi to ER traffic (GET) complex, which is composed of GET1, GET2 and GET3. Within the complex, GET1 and GET2 form a heterotetramer which is stabilized by phosphatidylinositol binding and which binds to the GET3 homodimer.

It localises to the endoplasmic reticulum membrane. It is found in the golgi apparatus membrane. Its function is as follows. Required for the post-translational delivery of tail-anchored (TA) proteins to the endoplasmic reticulum. Together with GET1, acts as a membrane receptor for soluble GET3, which recognizes and selectively binds the transmembrane domain of TA proteins in the cytosol. The GET complex cooperates with the HDEL receptor ERD2 to mediate the ATP-dependent retrieval of resident ER proteins that contain a C-terminal H-D-E-L retention signal from the Golgi to the ER. In Scheffersomyces stipitis (strain ATCC 58785 / CBS 6054 / NBRC 10063 / NRRL Y-11545) (Yeast), this protein is Golgi to ER traffic protein 2.